The following is a 444-amino-acid chain: Phosphoglucosamine mutase (444 aa).

Serine 102 serves as the catalytic Phosphoserine intermediate. 4 residues coordinate Mg(2+): serine 102, aspartate 239, aspartate 241, and aspartate 243. Residue serine 102 is modified to Phosphoserine.

Belongs to the phosphohexose mutase family. The cofactor is Mg(2+). Activated by phosphorylation.

The catalysed reaction is alpha-D-glucosamine 1-phosphate = D-glucosamine 6-phosphate. Its function is as follows. Catalyzes the conversion of glucosamine-6-phosphate to glucosamine-1-phosphate. This is Phosphoglucosamine mutase from Mycolicibacterium paratuberculosis (strain ATCC BAA-968 / K-10) (Mycobacterium paratuberculosis).